An 82-amino-acid polypeptide reads, in one-letter code: U16-lycotoxin-Ls1b (82 aa).

Residues 1 to 22 (MSPKVQALLLLVGLITFLEVHA) form the signal peptide. A propeptide spanning residues 23-34 (EEELSETVESER) is cleaved from the precursor. Cystine bridges form between C36/C51, C43/C56, C50/C67, and C58/C65.

This sequence belongs to the neurotoxin 02 (plectoxin) family. 04 (U16-lycotoxin) subfamily. As to expression, expressed by the venom gland.

It localises to the secreted. The chain is U16-lycotoxin-Ls1b from Lycosa singoriensis (Wolf spider).